The primary structure comprises 218 residues: Ribonuclease HII (218 aa).

The 195-residue stretch at Gly-12–Leu-206 folds into the RNase H type-2 domain. Residues Asp-18, Glu-19, and Asp-115 each contribute to the a divalent metal cation site.

It belongs to the RNase HII family. It depends on Mn(2+) as a cofactor. The cofactor is Mg(2+).

It is found in the cytoplasm. The enzyme catalyses Endonucleolytic cleavage to 5'-phosphomonoester.. Endonuclease that specifically degrades the RNA of RNA-DNA hybrids. The protein is Ribonuclease HII of Rhodospirillum rubrum (strain ATCC 11170 / ATH 1.1.1 / DSM 467 / LMG 4362 / NCIMB 8255 / S1).